The chain runs to 184 residues: MKLSKIALAAALVFGINSVATAENETPAPKVSSTKGEIQLKGEIVNSACGLAASSSPVIVDFSEIPTSALANLQKAGNIKKDIELQDCDTTVAKTATVSYTPSVVNAVNKDLASFVSGNASGAGIGLMDAGSKAVKWNTATTPVQLINGVSKIPFVAYVQAESADAKVTPGEFQAVINFQVDYQ.

Positions 1–22 (MKLSKIALAAALVFGINSVATA) are cleaved as a signal peptide. Cys49 and Cys88 form a disulfide bridge.

Belongs to the fimbrial protein family.

The protein localises to the fimbrium. In terms of biological role, major structural component of PMF fimbriae. The polypeptide is Major fimbrial subunit (pmfA) (Proteus mirabilis (strain HI4320)).